We begin with the raw amino-acid sequence, 168 residues long: Prespore-specific protein A (168 aa).

The signal sequence occupies residues 1 to 19 (MKFQHTFIALLSLLTYANA). Thr110, Thr114, Thr116, Thr118, Thr120, Thr122, Thr124, Thr126, Thr128, Thr130, Thr132, Thr134, and Thr138 each carry an O-linked (GlcNAc) threonine glycan. Repeat copies occupy residues 116–119 (TPTV), 120–123 (TPTV), and 124–127 (TPTV). Residues 116 to 127 (TPTVTPTVTPTV) are 3 X 4 AA tandem repeats of T-P-T-V. Low complexity predominate over residues 116-131 (TPTVTPTVTPTVTPTP). The segment at 116–147 (TPTVTPTVTPTVTPTPTNTPNPTPSQTSTTTG) is disordered. A glycan (O-linked (GlcNAc) serine) is linked at Ser140. Residue Gly147 is the site of GPI-like-anchor amidated glycine attachment. A propeptide spans 148–168 (SASTVVASLSLIIFSMILSLC) (removed in mature form).

The protein belongs to the ponticulin family. O-glycosylated in the repeat region. The oligosaccharides contain N-acetylglucosamine and fucose as the major constituents. In terms of processing, the GPI-like-anchor contains a phosphoceramide group, rather than a phosphatidyl group.

The protein localises to the cell membrane. In terms of biological role, may bind F-actin and nucleates actin assembly. The sequence is that of Prespore-specific protein A (pspA) from Dictyostelium discoideum (Social amoeba).